The sequence spans 369 residues: MKSGRFIGVMSGTSLDGVDVVLATIDEHRVAQLASLSWPIPVSLKQAVLDICQGQQLTLSQFGQLDTQLGRLFADAVNALLKEQNLQARDIVAIGCHGQTVWHEPTGVAPHTLQIGDNNQIVARTGITVVGDFRRRDIALGGQGAPLVPAFHHALLAHPTEQRMVLNIGGIANLSLLIPGQPVGGYDTGPGNMLMDAWIWRQAGKPYDKDAEWARAGKVILPLLQNMLSDPYFSQPAPKSTGREYFNYGWLERHLRHFPGVDPRDVQATLAELTAVTISEQVLLSGGCERLMVCGGGSRNPLLMARLAALLPGTEVTTTDAVGISGDDMEALAFAWLAWRTLAGLPGNLPSVTGASQETVLGAIFPANP.

12-19 (GTSLDGVD) contributes to the ATP binding site.

Belongs to the anhydro-N-acetylmuramic acid kinase family.

It carries out the reaction 1,6-anhydro-N-acetyl-beta-muramate + ATP + H2O = N-acetyl-D-muramate 6-phosphate + ADP + H(+). It functions in the pathway amino-sugar metabolism; 1,6-anhydro-N-acetylmuramate degradation. The protein operates within cell wall biogenesis; peptidoglycan recycling. In terms of biological role, catalyzes the specific phosphorylation of 1,6-anhydro-N-acetylmuramic acid (anhMurNAc) with the simultaneous cleavage of the 1,6-anhydro ring, generating MurNAc-6-P. Is required for the utilization of anhMurNAc either imported from the medium or derived from its own cell wall murein, and thus plays a role in cell wall recycling. The protein is Anhydro-N-acetylmuramic acid kinase of Escherichia coli O8 (strain IAI1).